Reading from the N-terminus, the 95-residue chain is Large ribosomal subunit protein eL42 (95 aa).

Positions 11, 14, 71, and 74 each coordinate Zn(2+). The segment at 11–74 (CPRCNTHTEH…QVLVITCTVC (64 aa)) adopts a C4-type zinc-finger fold.

It belongs to the eukaryotic ribosomal protein eL42 family. As to quaternary structure, part of the 50S ribosomal subunit. Requires Zn(2+) as cofactor.

Binds to the 23S rRNA. This is Large ribosomal subunit protein eL42 from Aeropyrum pernix (strain ATCC 700893 / DSM 11879 / JCM 9820 / NBRC 100138 / K1).